The following is a 275-amino-acid chain: 3-oxo-isoapionate decarboxylase (275 aa).

It catalyses the reaction 3-oxoisoapionate + H(+) = L-erythrulose + CO2. Its pathway is carbohydrate metabolism. Functionally, involved in catabolism of D-apiose. Catalyzes decarboxylation of 3-oxo-isoapionate to L-erythrulose. The sequence is that of 3-oxo-isoapionate decarboxylase from Pectobacterium atrosepticum (strain SCRI 1043 / ATCC BAA-672) (Erwinia carotovora subsp. atroseptica).